A 604-amino-acid polypeptide reads, in one-letter code: Glutamine--fructose-6-phosphate aminotransferase [isomerizing] (604 aa).

Cys2 functions as the Nucleophile; for GATase activity in the catalytic mechanism. The Glutamine amidotransferase type-2 domain maps to 2 to 218 (CGIVGVVGNR…DKELVILTKD (217 aa)). SIS domains lie at 284–423 (IITS…ANGK) and 456–594 (VQAL…VDKP). The active-site For Fru-6P isomerization activity is the Lys599.

Homodimer.

It localises to the cytoplasm. It carries out the reaction D-fructose 6-phosphate + L-glutamine = D-glucosamine 6-phosphate + L-glutamate. Catalyzes the first step in hexosamine metabolism, converting fructose-6P into glucosamine-6P using glutamine as a nitrogen source. This Streptococcus pyogenes serotype M18 (strain MGAS8232) protein is Glutamine--fructose-6-phosphate aminotransferase [isomerizing].